The sequence spans 366 residues: 3-dehydroquinate synthase (366 aa).

Residues 74–79 (SGEAAK), 108–112 (GVVGD), 132–133 (TT), lysine 144, lysine 153, and 171–174 (FLRT) each bind NAD(+). Glutamate 186, histidine 249, and histidine 266 together coordinate Zn(2+).

It belongs to the sugar phosphate cyclases superfamily. Dehydroquinate synthase family. Co(2+) is required as a cofactor. Zn(2+) serves as cofactor. Requires NAD(+) as cofactor.

It is found in the cytoplasm. The enzyme catalyses 7-phospho-2-dehydro-3-deoxy-D-arabino-heptonate = 3-dehydroquinate + phosphate. It functions in the pathway metabolic intermediate biosynthesis; chorismate biosynthesis; chorismate from D-erythrose 4-phosphate and phosphoenolpyruvate: step 2/7. In terms of biological role, catalyzes the conversion of 3-deoxy-D-arabino-heptulosonate 7-phosphate (DAHP) to dehydroquinate (DHQ). The chain is 3-dehydroquinate synthase from Geobacillus kaustophilus (strain HTA426).